The chain runs to 318 residues: MKIKQAIDKIPGGLMLVPLFLGAFCNTFTPGAGKFLGSFSNGLITGTIPILAVWFFCMGASIELKATGSMLKKSGVLVVTKLATAWVVAMIAGAFLPGDGIQNGLLAGISVLALVAAMDMTNGGLYAALMNQYGSKEEAGAFVLMSLESGPLMTMVILGASGIATFEPQLFVGAVLPFLIGFTLGNLDPDLRKLFGNSVQTLIPFFAFALGNTINLSVILQTGFAGIFLGVLVIIVTGIPLILADKFIGGGNGTAGIAASSSAGAAVATPLLIANMAPEFAPVAQQATALVATSVIVTSVLVPIITALWAKRFSPKHA.

Transmembrane regions (helical) follow at residues 10-30, 42-62, 76-96, 105-125, 139-159, 162-182, 199-219, 224-244, 254-274, and 289-309; these read IPGGLMLVPLFLGAFCNTFTP, GLITGTIPILAVWFFCMGASI, VLVVTKLATAWVVAMIAGAFL, LLAGISVLALVAAMDMTNGGL, AGAFVLMSLESGPLMTMVILG, GIATFEPQLFVGAVLPFLIGF, VQTLIPFFAFALGNTINLSVI, FAGIFLGVLVIIVTGIPLILA, TAGIAASSSAGAAVATPLLIA, and ALVATSVIVTSVLVPIITALW.

Belongs to the KdgT transporter family.

It is found in the cell inner membrane. It carries out the reaction 2-dehydro-3-deoxy-D-gluconate(in) + H(+)(in) = 2-dehydro-3-deoxy-D-gluconate(out) + H(+)(out). In terms of biological role, catalyzes the proton-dependent uptake of 2-keto-3-deoxygluconate (KDG) into the cell. The protein is 2-keto-3-deoxygluconate permease of Pectobacterium atrosepticum (strain SCRI 1043 / ATCC BAA-672) (Erwinia carotovora subsp. atroseptica).